The sequence spans 155 residues: 2-C-methyl-D-erythritol 2,4-cyclodiphosphate synthase (155 aa).

Residues aspartate 8 and histidine 10 each contribute to the a divalent metal cation site. 4-CDP-2-C-methyl-D-erythritol 2-phosphate-binding positions include 8–10 (DVH) and 34–35 (HS). Histidine 42 contributes to the a divalent metal cation binding site. 4-CDP-2-C-methyl-D-erythritol 2-phosphate-binding positions include 56–58 (DIG), 61–65 (FPDSD), 132–135 (TTEE), phenylalanine 139, and arginine 142.

Belongs to the IspF family. As to quaternary structure, homotrimer. Requires a divalent metal cation as cofactor.

The enzyme catalyses 4-CDP-2-C-methyl-D-erythritol 2-phosphate = 2-C-methyl-D-erythritol 2,4-cyclic diphosphate + CMP. The protein operates within isoprenoid biosynthesis; isopentenyl diphosphate biosynthesis via DXP pathway; isopentenyl diphosphate from 1-deoxy-D-xylulose 5-phosphate: step 4/6. In terms of biological role, involved in the biosynthesis of isopentenyl diphosphate (IPP) and dimethylallyl diphosphate (DMAPP), two major building blocks of isoprenoid compounds. Catalyzes the conversion of 4-diphosphocytidyl-2-C-methyl-D-erythritol 2-phosphate (CDP-ME2P) to 2-C-methyl-D-erythritol 2,4-cyclodiphosphate (ME-CPP) with a corresponding release of cytidine 5-monophosphate (CMP). The protein is 2-C-methyl-D-erythritol 2,4-cyclodiphosphate synthase of Clostridium acetobutylicum (strain ATCC 824 / DSM 792 / JCM 1419 / IAM 19013 / LMG 5710 / NBRC 13948 / NRRL B-527 / VKM B-1787 / 2291 / W).